The sequence spans 276 residues: Ribonuclease 3 (276 aa).

In terms of domain architecture, RNase III spans 30 to 161 (LTAFIRSLFK…LTGAIYLDRG (132 aa)). Glu-74 contacts Mg(2+). Residue Asp-78 is part of the active site. 2 residues coordinate Mg(2+): Asp-147 and Glu-150. The active site involves Glu-150. Positions 188-257 (NHKSRLIEHT…AEEAMGALER (70 aa)) constitute a DRBM domain.

It belongs to the ribonuclease III family. As to quaternary structure, homodimer. Mg(2+) is required as a cofactor.

It localises to the cytoplasm. The catalysed reaction is Endonucleolytic cleavage to 5'-phosphomonoester.. Functionally, digests double-stranded RNA. Involved in the processing of primary rRNA transcript to yield the immediate precursors to the large and small rRNAs (23S and 16S). Processes some mRNAs, and tRNAs when they are encoded in the rRNA operon. Processes pre-crRNA and tracrRNA of type II CRISPR loci if present in the organism. This chain is Ribonuclease 3, found in Chlorobium luteolum (strain DSM 273 / BCRC 81028 / 2530) (Pelodictyon luteolum).